The primary structure comprises 742 residues: Photosystem I P700 chlorophyll a apoprotein A2 (742 aa).

Helical transmembrane passes span 46-69, 135-158, 175-199, 273-291, 336-359, 375-401, 423-445, and 525-543; these read LFST…FHVA, LFQA…LHLQ, LNHH…HVAI, IAHH…GHMY, LHFQ…QHMG, SALY…IFFV, ALIS…IYVH, and FLVH…LILI. [4Fe-4S] cluster-binding residues include Cys567 and Cys576. Transmembrane regions (helical) follow at residues 583–604 and 651–673; these read AMYL…YWHW and LSPW…MFLI. The divinyl chlorophyll a site is built by His662, Met670, and Tyr678. Trp679 serves as a coordination point for phylloquinone. The chain crosses the membrane as a helical span at residues 715–735; sequence LVGLAHFTIGNILTFGAFVIA.

The protein belongs to the PsaA/PsaB family. In terms of assembly, the PsaA/B heterodimer binds the P700 divinyl chlorophyll special pair and subsequent electron acceptors. PSI consists of a core antenna complex that captures photons, and an electron transfer chain that converts photonic excitation into a charge separation. The cyanobacterial PSI reaction center is composed of one copy each of PsaA,B,C,D,E,F,I,J,K,L,M and X, and forms trimeric complexes. PSI electron transfer chain: 5 divinyl chlorophyll a, 1 divinyl chlorophyll a', 2 phylloquinones and 3 4Fe-4S clusters. PSI core antenna: 90 divinyl chlorophyll a, 22 carotenoids, 3 phospholipids and 1 galactolipid. P700 is a divinyl chlorophyll a/divinyl chlorophyll a' dimer, A0 is one or more divinyl chlorophyll a, A1 is one or both phylloquinones and FX is a shared 4Fe-4S iron-sulfur center. serves as cofactor.

The protein resides in the cellular thylakoid membrane. The catalysed reaction is reduced [plastocyanin] + hnu + oxidized [2Fe-2S]-[ferredoxin] = oxidized [plastocyanin] + reduced [2Fe-2S]-[ferredoxin]. Functionally, psaA and PsaB bind P700, the primary electron donor of photosystem I (PSI), as well as the electron acceptors A0, A1 and FX. PSI is a plastocyanin/cytochrome c6-ferredoxin oxidoreductase, converting photonic excitation into a charge separation, which transfers an electron from the donor P700 chlorophyll pair to the spectroscopically characterized acceptors A0, A1, FX, FA and FB in turn. Oxidized P700 is reduced on the lumenal side of the thylakoid membrane by plastocyanin or cytochrome c6. In Prochlorococcus marinus (strain MIT 9312), this protein is Photosystem I P700 chlorophyll a apoprotein A2.